A 475-amino-acid polypeptide reads, in one-letter code: Glycogen synthase (475 aa).

An ADP-alpha-D-glucose-binding site is contributed by lysine 15.

The protein belongs to the glycosyltransferase 1 family. Bacterial/plant glycogen synthase subfamily.

It catalyses the reaction [(1-&gt;4)-alpha-D-glucosyl](n) + ADP-alpha-D-glucose = [(1-&gt;4)-alpha-D-glucosyl](n+1) + ADP + H(+). The protein operates within glycan biosynthesis; glycogen biosynthesis. Synthesizes alpha-1,4-glucan chains using ADP-glucose. The protein is Glycogen synthase of Anaeromyxobacter dehalogenans (strain 2CP-C).